The sequence spans 391 residues: Curcumin synthase 2 (391 aa).

The active site involves C166.

Belongs to the thiolase-like superfamily. Chalcone/stilbene synthases family. Homodimer.

The enzyme catalyses (E)-feruloylacetyl-CoA + (E)-feruloyl-CoA + H2O = curcumin + CO2 + 2 CoA. The protein operates within secondary metabolite biosynthesis; flavonoid biosynthesis. In terms of biological role, catalyzes the synthesis of curcumin by condensing feruloyl-CoA with a diketide-CoA in the curcuminoid biosynthesis. The sequence is that of Curcumin synthase 2 (CURS2) from Curcuma longa (Turmeric).